The following is a 70-amino-acid chain: DNA-binding transcriptional activator AlpA (70 aa).

Positions 12-31 (LPAVIQKTGMARATIYDWLN) form a DNA-binding region, H-T-H motif.

Its function is as follows. Positive regulator of the expression of the slpA gene. When overexpressed, leads to suppression of the capsule overproduction and UV sensitivity phenotypes of cells mutant for the Lon ATP-dependent protease. Part of the cryptic P4-like prophage CP4-57. Overexpression of AlpA leads to excision of the CP4-57 prophage by IntA. This inactivates ssrA (the gene upstream of the prophage) that encodes tmRNA which is required to rescue stalled ribosomes in a process known as trans-translation. The protein is DNA-binding transcriptional activator AlpA of Escherichia coli (strain K12).